Reading from the N-terminus, the 1147-residue chain is PDZ domain-containing protein 8 (1147 aa).

Residues 2 to 24 form a helical membrane-spanning segment; that stretch reads GLLLLILASAVLGSFLTLLAQFL. The SMP-LTD domain occupies 87 to 293; sequence APPTLETCYF…LPSYKIRFKP (207 aa). In terms of domain architecture, PDZ spans 365–448; sequence TVELIKGNLQ…RVLVYYQRPA (84 aa). Phosphoserine is present on residues Ser-490, Ser-515, and Ser-532. Residues 504–673 are disordered; that stretch reads ELKEETQPLS…DSSDDPQMWE (170 aa). A compositionally biased stretch (polar residues) spans 510-524; the sequence is QPLSHSPKRTPTTLS. Positions 557-576 are enriched in polar residues; sequence KPSTLKTSETTEAAQVSKPQ. Over residues 580–596 the composition is skewed to pro residues; it reads FKPPVPPRPQGRVPLPP. Residues 833-884 form a Phorbol-ester/DAG-type zinc finger; it reads KHSFQDTQFQNPTWCDYCKKKVWTKAASQCMFCAYVCHKKCQEKCLAETPLC. Positions 948–990 are disordered; the sequence is RLSEPGTDLVEPSPKHTPNTSDNEGSDTEVCGSNSPSKRGNSA. A phosphoserine mark is found at Ser-960 and Ser-973. Over residues 978–987 the composition is skewed to polar residues; sequence CGSNSPSKRG. A coiled-coil region spans residues 1021–1056; it reads PTEERIQKLEFMLDKLQNEIDQELEHNNSLVREEKE. Positions 1126–1137 are enriched in polar residues; it reads QLIDSQPFSNIS. Residues 1126–1147 form a disordered region; sequence QLIDSQPFSNISDDLFGPSESV.

In terms of assembly, interacts with MSN.

It is found in the endoplasmic reticulum membrane. In terms of biological role, molecular tethering protein that connects endoplasmic reticulum and mitochondria membranes. PDZD8-dependent endoplasmic reticulum-mitochondria membrane tethering is essential for endoplasmic reticulum-mitochondria Ca(2+) transfer. In neurons, involved in the regulation of dendritic Ca(2+) dynamics by regulating mitochondrial Ca(2+) uptake in neurons. The protein is PDZ domain-containing protein 8 of Mus musculus (Mouse).